A 716-amino-acid polypeptide reads, in one-letter code: MEDCLHTSSENLSKLVSWAHSHGTICSLIPNLKHLLSEGSHGNLTAMWGCSAGHAYHWPLTATCRAGSQERVCFQDNRSFNSDSPSIIGVPSETQTSPVERYPGRPVKAKLDCNRTRDSCDFSYCSEPSELDETVEEYEDENTLFDMVCESSVTDEDSDFEPQTQRPQSIARKRPGVVPSSLHSSSQTQMVDECSNDVIIKKIKQEIPEDYYIVANAELTGGVDGPALSLTQMAKPKPQTHAGPSCVGSAKLIPHVTSAISTELDPHGMSASPSVISRPIVQKTARVSLASPNRGPPGTHGTNQQVAMQMPVSTSHPNKQISIPLSALQLPGQDEQVASEEFLSHLPSQVSSCEVALSPSVNTEPEVSSSQQQPPVAPAITTEATAQCIPAYSTKLNKFPVFNINDDLNDLCTSAVSPNTTKATRYALNVWRYWCMTNGLKDHTDITKIPAVKLNELLENFYVTVKKSDGSDFLATSLHAIRRGLDRILKNAGVGFSITSSTFSSSTKKLKEKLWVLSKAGMSGARSRNIVYFSLSDEEEMWQAGCLGDDSPITLLSTVVKYNSQYLNMRTLQEHADLMYGDIELLKDPQNQPYFARTDSVKRESRSGSTRVCHGKIYHEHSRGHKQCPYCLLYKYMYIHRPPTQMEAKSPFYLTARKEATDMGSVWYEEQRMGLRSLRGIVPNLAKKVKLENCENFTFVSFTQVSRRLGSHSCCQ.

2 disordered regions span residues S84–P103 and V153–Q189. S97 bears the Phosphoserine mark. Residues K201, K204, K237, K283, and K626 each participate in a glycyl lysine isopeptide (Lys-Gly) (interchain with G-Cter in SUMO2) cross-link.

This is an uncharacterized protein from Homo sapiens (Human).